The chain runs to 452 residues: Molybdate-anion transporter (452 aa).

The next 12 helical transmembrane spans lie at 1-21 (MLLTAYFVLVGLIALWAVLEF), 45-65 (YDFYRTYFPALAADWLQGPYL), 79-99 (IAIIYVCGFGASVFAGLVSAP), 130-150 (FVLITGRVLGGFSSSLLFSSF), 180-200 (NGGIAIAAGVIANACAEWLGL), 201-221 (GPASPSVLAVPLLVLSVALVI), 251-271 (VLLLGTIQALFESVVYIFIFL), 281-301 (TPLGIAFSSFMAASAAGSSLY), 316-336 (VLCLSILMVFFSLFMLTFSTA), 346-366 (LLAFLLIELACGLYFPAMGFL), 377-397 (IGVLNWFRVPLNLLAGLGLLV), and 410-430 (MFSLCAITMLLALLCVVSLFT).

The protein belongs to the major facilitator superfamily.

Its subcellular location is the cell membrane. Functionally, mediates high-affinity intracellular uptake of the rare oligo-element molybdenum. This chain is Molybdate-anion transporter (mfsd5), found in Xenopus tropicalis (Western clawed frog).